A 213-amino-acid chain; its full sequence is MFNQSYLNVYFICGTSDVPSHRTIHEVLEAALKAGITLFQFREKGESALKGNDKLVLAKELQHLCHQYDVPFIVNDDVSLAKEINADGIHVGQDDAKVKEIAQYFTDKIIGLSISDLDEYAKSDLTHVDYIGVGPIYPTPSKHDAHIPVGPEMIATFKEMNPQLPIVAIGGINTNNVAPIVEAGANGISVISAISKSENIEKTVNRFKDFFNN.

4-amino-2-methyl-5-(diphosphooxymethyl)pyrimidine contacts are provided by residues 40–44 (QFREK) and N75. Mg(2+) is bound by residues D76 and D95. S113 provides a ligand contact to 4-amino-2-methyl-5-(diphosphooxymethyl)pyrimidine. A 2-[(2R,5Z)-2-carboxy-4-methylthiazol-5(2H)-ylidene]ethyl phosphate-binding site is contributed by 139 to 141 (TPS). A 4-amino-2-methyl-5-(diphosphooxymethyl)pyrimidine-binding site is contributed by K142. 2-[(2R,5Z)-2-carboxy-4-methylthiazol-5(2H)-ylidene]ethyl phosphate-binding positions include G171 and 191–192 (IS).

This sequence belongs to the thiamine-phosphate synthase family. Mg(2+) is required as a cofactor.

The catalysed reaction is 2-[(2R,5Z)-2-carboxy-4-methylthiazol-5(2H)-ylidene]ethyl phosphate + 4-amino-2-methyl-5-(diphosphooxymethyl)pyrimidine + 2 H(+) = thiamine phosphate + CO2 + diphosphate. It catalyses the reaction 2-(2-carboxy-4-methylthiazol-5-yl)ethyl phosphate + 4-amino-2-methyl-5-(diphosphooxymethyl)pyrimidine + 2 H(+) = thiamine phosphate + CO2 + diphosphate. The enzyme catalyses 4-methyl-5-(2-phosphooxyethyl)-thiazole + 4-amino-2-methyl-5-(diphosphooxymethyl)pyrimidine + H(+) = thiamine phosphate + diphosphate. Its pathway is cofactor biosynthesis; thiamine diphosphate biosynthesis; thiamine phosphate from 4-amino-2-methyl-5-diphosphomethylpyrimidine and 4-methyl-5-(2-phosphoethyl)-thiazole: step 1/1. In terms of biological role, condenses 4-methyl-5-(beta-hydroxyethyl)thiazole monophosphate (THZ-P) and 2-methyl-4-amino-5-hydroxymethyl pyrimidine pyrophosphate (HMP-PP) to form thiamine monophosphate (TMP). This Staphylococcus aureus (strain JH1) protein is Thiamine-phosphate synthase.